The chain runs to 962 residues: MGPFSSASDRNSAAATAAPATATATPSPLSKTPSAATSDDSSTSKKFLKRLNILPLRSRTRNIADFHIRPDDPHRKYSAGDHVQGAVVLTVVKPVRITHLTVLLHGYVRVYKGPGAQNNEPVRSPAEIKNISSRGERKKYYNGYASLFQDEQVLSSDGRLEPGRYEFNFDLLFPEKGLPSSIDFERGTISYMITATLTRPTSVAPTTSCERKIYLMEQLDVGPLAPPKAQTVDLRPISKRAKKKRPAGGDRRSVISSERLSADVPAESLSDGDSARINDTSTEGSLSIVGDDVGQEGFSQAPRSVSHSEVRSLSGDSAASLSTHPSRAYSETNQLAIVGSAMTGKRISFADERTIKLRVEVLKGGCLPGDVIPVKVSVNHIKMIKSMHGVIVTLFRQGRIDSSPLQLSKEDWKKSESDDYYYPKSRTGLSGLSLSSAGSCSMFRKDLSQAFAPLITDPVNFSATLTTSVRVPEDSFPTIKGVPGEMISFRYFVEVIVDLGGKLANHLQGGASSGSRVGATGVVGTPFENVGTLPSWGATGSTSILDTDRLKRIQGVIPGYYEVIVGTTDSNRSRGKGPQRPSLTHTPSVTGGSNYVENEYNEKGGWPNSMHDDDGYGPESANPHDDYASYPPQTTYPHGYVQQPPYWNYVPDSSQHEQAIPAPHYIPPPDLPDENSLTEKERIRRAEQRLLPSQPPIAAASSSSFSAAVPSPSASSHVPDSSLLLNGDNIYDAEDDVPTPAATPATASPFDHALAPVYTPTPAEDLPSAPTLEELDRPPPISRGPSHHPPSTTEDKQELERRRLLAEASAPPEFPEDYIPDEGGGPVTPAGPSGSRAGPSAPPPAPPVAFEPSAPVLFENDEDYHGGGYTAGGPSFPSAASGNGGHEEETVPEYTYNNHRPGSVGAVTVVGNPSSPVLAPASAFFPASGSGNVHDSPREQGQQARSDSSSPPPIEYLPRYER.

4 disordered regions span residues 1–43 (MGPF…DSST), 225–326 (APPK…THPS), 568–675 (TDSN…PDEN), and 689–962 (RLLP…RYER). Residues 237 to 246 (ISKRAKKKRP) show a composition bias toward basic residues. Polar residues-rich tracts occupy residues 297–307 (GFSQAPRSVSH), 314–326 (SGDS…THPS), and 581–596 (PSLT…SNYV). Composition is skewed to low complexity over residues 696–722 (PIAA…PDSS) and 738–747 (PTPAATPATA). Basic and acidic residues predominate over residues 793 to 805 (TEDKQELERRRLL). Residues 830 to 839 (AGPSGSRAGP) show a composition bias toward low complexity. A compositionally biased stretch (pro residues) spans 840-849 (SAPPPAPPVA). A compositionally biased stretch (low complexity) spans 913 to 928 (PSSPVLAPASAFFPAS). Positions 929–949 (GSGNVHDSPREQGQQARSDSS) are enriched in polar residues.

The protein belongs to the arrestin family. PalF/RIM8 subfamily.

Its function is as follows. Required for the proteolytic cleavage of the transcription factor pacc-1 in response to alkaline ambient pH. The chain is pH-response regulator protein palF/prr-3 (prr-3) from Neurospora crassa (strain ATCC 24698 / 74-OR23-1A / CBS 708.71 / DSM 1257 / FGSC 987).